The sequence spans 85 residues: Beta-insect depressant toxin Lqh-dprIT3d (85 aa).

Positions methionine 1–alanine 21 are cleaved as a signal peptide. An LCN-type CS-alpha/beta domain is found at aspartate 22 to glycine 82. Disulfide bonds link cysteine 31–cysteine 81, cysteine 35–cysteine 56, cysteine 42–cysteine 63, and cysteine 46–cysteine 65. The residue at position 82 (glycine 82) is a Glycine amide.

Belongs to the long (4 C-C) scorpion toxin superfamily. Sodium channel inhibitor family. Beta subfamily. As to expression, expressed by the venom gland.

Its subcellular location is the secreted. Its function is as follows. Depressant insect beta-toxins cause a transient contraction paralysis followed by a slow flaccid paralysis. They bind voltage-independently at site-4 of sodium channels (Nav) and block action potentials, primarily by depolarizing the axonal membrane and suppressing the sodium current. This depressant toxin is active only on insects. It is found in a relatively small amount in the venom, and its activity on insects is 10-fold higher compared to other known depressant toxins. This chain is Beta-insect depressant toxin Lqh-dprIT3d, found in Leiurus hebraeus (Hebrew deathstalker scorpion).